We begin with the raw amino-acid sequence, 276 residues long: Large ribosomal subunit protein uL2 (276 aa).

The disordered stretch occupies residues 224–265 (VMNPVDHPHGGGEGRTASGRHPVSPWGLPTKGYKTRNNKRTD).

It belongs to the universal ribosomal protein uL2 family. Part of the 50S ribosomal subunit. Forms a bridge to the 30S subunit in the 70S ribosome.

Functionally, one of the primary rRNA binding proteins. Required for association of the 30S and 50S subunits to form the 70S ribosome, for tRNA binding and peptide bond formation. It has been suggested to have peptidyltransferase activity; this is somewhat controversial. Makes several contacts with the 16S rRNA in the 70S ribosome. The chain is Large ribosomal subunit protein uL2 from Dichelobacter nodosus (strain VCS1703A).